A 702-amino-acid chain; its full sequence is Polyribonucleotide nucleotidyltransferase (702 aa).

Mg(2+)-binding residues include D487 and D493. Residues P554 to I613 form the KH domain. One can recognise an S1 motif domain in the interval G623 to K691.

Belongs to the polyribonucleotide nucleotidyltransferase family. Component of the RNA degradosome, which is a multiprotein complex involved in RNA processing and mRNA degradation. Mg(2+) serves as cofactor.

The protein localises to the cytoplasm. The enzyme catalyses RNA(n+1) + phosphate = RNA(n) + a ribonucleoside 5'-diphosphate. In terms of biological role, involved in mRNA degradation. Catalyzes the phosphorolysis of single-stranded polyribonucleotides processively in the 3'- to 5'-direction. This chain is Polyribonucleotide nucleotidyltransferase, found in Stenotrophomonas maltophilia (strain R551-3).